Consider the following 311-residue polypeptide: Thioredoxin reductase (311 aa).

Residues 15-18 (SGPA), 37-44 (EGTQFGGA), asparagine 53, and valine 86 contribute to the FAD site. Cysteines 137 and 140 form a disulfide. Residues serine 158, histidine 177, arginine 183, isoleucine 240, and tyrosine 260 each contribute to the NADP(+) site. FAD is bound by residues aspartate 280 and 287–290 (RQAI). Arginine 287 provides a ligand contact to NADP(+).

This sequence belongs to the class-II pyridine nucleotide-disulfide oxidoreductase family. In terms of assembly, homodimer. FAD is required as a cofactor.

The protein localises to the cytoplasm. It catalyses the reaction [thioredoxin]-dithiol + NADP(+) = [thioredoxin]-disulfide + NADPH + H(+). This is Thioredoxin reductase from Mycolicibacterium smegmatis (Mycobacterium smegmatis).